Consider the following 972-residue polypeptide: Isoleucine--tRNA ligase (972 aa).

A 'HIGH' region motif is present at residues 63–73 (PYANGNIHIGH). Glutamate 603 provides a ligand contact to L-isoleucyl-5'-AMP. Residues 644 to 648 (KMSKS) carry the 'KMSKS' region motif. Lysine 647 serves as a coordination point for ATP.

The protein belongs to the class-I aminoacyl-tRNA synthetase family. IleS type 1 subfamily. In terms of assembly, monomer.

Its subcellular location is the cytoplasm. The catalysed reaction is tRNA(Ile) + L-isoleucine + ATP = L-isoleucyl-tRNA(Ile) + AMP + diphosphate. Its function is as follows. Catalyzes the attachment of isoleucine to tRNA(Ile). As IleRS can inadvertently accommodate and process structurally similar amino acids such as valine, to avoid such errors it has two additional distinct tRNA(Ile)-dependent editing activities. One activity is designated as 'pretransfer' editing and involves the hydrolysis of activated Val-AMP. The other activity is designated 'posttransfer' editing and involves deacylation of mischarged Val-tRNA(Ile). The polypeptide is Isoleucine--tRNA ligase (Brucella abortus (strain 2308)).